The following is a 406-amino-acid chain: Phosphorylase b kinase gamma catalytic chain, liver/testis isoform (406 aa).

Positions 24 to 291 (YDPKDVIGRG…AEQALQHPFF (268 aa)) constitute a Protein kinase domain. Residues 30 to 38 (IGRGVSSVV) and K53 each bind ATP. Catalysis depends on D153, which acts as the Proton acceptor. Residues 306 to 330 (QRFRVAVWTVLAAGRVALSAHRIRP) are calmodulin-binding (domain-N). Residues 346-370 (VRRLIDNCAFRLYGHWVKKGEQQNR) are calmodulin-binding (domain-C).

It belongs to the protein kinase superfamily. CAMK Ser/Thr protein kinase family. As to quaternary structure, hexadecamer of 4 heterotetramers, each composed of alpha, beta, gamma, and delta subunits. Alpha (PHKA1 or PHKA2) and beta (PHKB) are regulatory subunits, gamma (PHKG1 or PHKG2) is the catalytic subunit, and delta is calmodulin.

It catalyses the reaction 2 ATP + phosphorylase b = 2 ADP + phosphorylase a.. Its function is as follows. Catalytic subunit of the phosphorylase b kinase (PHK), which mediates the neural and hormonal regulation of glycogen breakdown (glycogenolysis) by phosphorylating and thereby activating glycogen phosphorylase. May regulate glycogeneolysis in the testis. In vitro, phosphorylates PYGM. The sequence is that of Phosphorylase b kinase gamma catalytic chain, liver/testis isoform (PHKG2) from Bos taurus (Bovine).